Here is a 1066-residue protein sequence, read N- to C-terminus: Hemoglobin and hemoglobin-haptoglobin-binding protein C (1066 aa).

The first 24 residues, 1–24 (MTNFKFTLLARSIAFALNASTAYA), serve as a signal peptide directing secretion. 7 consecutive repeat copies span residues 26–29 (QPTN), 30–33 (QPTN), 34–37 (QPTN), 38–41 (QPTN), 42–45 (QPTN), 46–49 (QPTN), and 50–53 (QPTN). A 7 X 4 AA tandem repeats of Q-P-T-N region spans residues 26–53 (QPTNQPTNQPTNQPTNQPTNQPTNQPTN). The span at 26–54 (QPTNQPTNQPTNQPTNQPTNQPTNQPTNQ) shows a compositional bias: low complexity. A disordered region spans residues 26-57 (QPTNQPTNQPTNQPTNQPTNQPTNQPTNQDSN). Residues 63–70 (EQINVSGS) carry the TonB box motif. Residues 66 to 200 (NVSGSTETIN…LGGSVIFETK (135 aa)) enclose the TBDR plug domain. In terms of domain architecture, TBDR beta-barrel spans 208–1066 (DKDYYVSYKR…NYRMSVQFEF (859 aa)). The short motif at 1049-1066 (NRLYAPGRNYRMSVQFEF) is the TonB C-terminal box element.

It belongs to the TonB-dependent receptor family. Hemoglobin/haptoglobin binding protein subfamily.

It localises to the cell outer membrane. Acts as a receptor for hemoglobin or the hemoglobin/haptoglobin complex of the human host and is required for heme uptake. This chain is Hemoglobin and hemoglobin-haptoglobin-binding protein C (hgpC), found in Haemophilus influenzae.